A 751-amino-acid chain; its full sequence is Diamine oxidase [copper-containing] (751 aa).

The N-terminal stretch at 1 to 19 (MPALGWAVAAILMLQTAMA) is a signal peptide. 2 N-linked (GlcNAc...) asparagine glycosylation sites follow: N110 and N168. The cysteines at positions 177 and 181 are disulfide-linked. The active-site Proton acceptor is D373. A disulfide bond links C391 and C417. The active-site Schiff-base intermediate with substrate; via topaquinone is Y461. 2',4',5'-topaquinone is present on Y461. Residues H510 and H512 each contribute to the Cu(2+) site. Ca(2+) is bound by residues D519, L520, and D521. N538 carries an N-linked (GlcNAc...) asparagine glycan. Residues E562, F653, N656, E658, D664, and L665 each contribute to the Ca(2+) site. H675 serves as a coordination point for Cu(2+). An N-linked (GlcNAc...) asparagine glycan is attached at N745.

This sequence belongs to the copper/topaquinone oxidase family. In terms of assembly, homodimer; disulfide-linked. It depends on Cu(2+) as a cofactor. Ca(2+) serves as cofactor. L-topaquinone is required as a cofactor. Post-translationally, N-glycosylated. In terms of processing, topaquinone (TPQ) is generated by copper-dependent autoxidation of a specific tyrosyl residue. As to expression, widely expressed with higher expression in placenta and kidney.

It localises to the secreted. The protein localises to the extracellular space. It is found in the cell membrane. The catalysed reaction is histamine + O2 + H2O = imidazole-4-acetaldehyde + H2O2 + NH4(+). The enzyme catalyses N(tau)-methylhistamine + O2 + H2O = 1-methylimidazole-4-acetaldehyde + H2O2 + NH4(+). It catalyses the reaction putrescine + O2 + H2O = 4-aminobutanal + H2O2 + NH4(+). It carries out the reaction cadaverine + O2 + H2O = 5-aminopentanal + H2O2 + NH4(+). Inhibited by amiloride and amiloride analogs. Inhibited by isoniazid, cimetidine, clonidine, berenil and pentamidine. Functionally, catalyzes the oxidative deamination of primary amines to the corresponding aldehydes with the concomitant production of hydrogen peroxide and ammonia. Its preferred substrates are the diamines histamine and 1-methylhistamine and it could therefore play a role in allergic and immune responses. Has a broad specificity for diamines and can also act on cadaverine and putrescine, two products of amino acid catabolism. It could also act on polyamines, like spermidine and spermine though less efficiently, and regulate various biological processes. The polypeptide is Diamine oxidase [copper-containing] (Homo sapiens (Human)).